The primary structure comprises 160 residues: Globin CTT-II beta (160 aa).

The signal sequence occupies residues 1-15 (MKFLVLALCIAAAVA). Residues 17–160 (PLSADEASLV…NVFNMMFSYL (144 aa)) form the Globin domain. Residues His75 and His110 each coordinate heme b.

Belongs to the globin family. As to quaternary structure, homodimer.

The polypeptide is Globin CTT-II beta (Chironomus thummi thummi (Midge)).